The primary structure comprises 286 residues: uncharacterized protein (286 aa).

Residues 4–18 (AVIGLGNMGQPIARN) and Thr95 contribute to the NAD(+) site. Residue Lys171 is part of the active site. Lys239 contacts NAD(+).

This sequence belongs to the HIBADH-related family.

This is an uncharacterized protein from Bacillus subtilis (strain 168).